A 508-amino-acid chain; its full sequence is CUGBP Elav-like family member 2 (508 aa).

2 necessary for RNA-binding, TNNT2 exon 5 and NMDA R1 exon 21 inclusion regions span residues 1-283 (MRCP…LQNL) and 357-508 (LAGM…SKPY). 3 RRM domains span residues 40 to 123 (IKMF…PADS), 132 to 212 (RKLF…FADT), and 423 to 501 (ANLF…LKRS).

The protein belongs to the CELF/BRUNOL family. In terms of assembly, interacts with A1CF. In terms of tissue distribution, expressed in frontal cortex. Isoform 1 is expressed in brain and lung. Isoform 2 is expressed in heart, brain, placenta, lung, liver, kidney, skeletal muscle and pancreas. Isoform 4 is expressed in heart, lung, skeletal muscle, kidney and pancreas.

It localises to the nucleus. The protein resides in the cytoplasm. In terms of biological role, RNA-binding protein implicated in the regulation of several post-transcriptional events. Involved in pre-mRNA alternative splicing, mRNA translation and stability. Mediates exon inclusion and/or exclusion in pre-mRNA that are subject to tissue-specific and developmentally regulated alternative splicing. Specifically activates exon 5 inclusion of TNNT2 in embryonic, but not adult, skeletal muscle. Activates TNNT2 exon 5 inclusion by antagonizing the repressive effect of PTB. Acts both as an activator and as a repressor of a pair of coregulated exons: promotes inclusion of the smooth muscle (SM) exon but exclusion of the non-muscle (NM) exon in actinin pre-mRNAs. Promotes inclusion of exonS 21 and exclusion of exon 5 of the NMDA receptor R1 pre-mRNA. Involved in the apoB RNA editing activity. Increases COX2 mRNA stability and inhibits COX2 mRNA translation in epithelial cells after radiation injury. Modulates the cellular apoptosis program by regulating COX2-mediated prostaglandin E2 (PGE2) expression. Binds to (CUG)n triplet repeats in the 3'-UTR of transcripts such as DMPK. Binds to the muscle-specific splicing enhancer (MSE) intronic sites flanking the TNNT2 alternative exon 5. Binds preferentially to UG-rich sequences, in particular UG repeat and UGUU motifs. Binds to apoB mRNA, specifically to AU-rich sequences located immediately upstream of the edited cytidine. Binds AU-rich sequences in the 3'-UTR of COX2 mRNA. Binds to an intronic RNA element responsible for the silencing of exon 21 splicing. Binds to (CUG)n repeats. May be a specific regulator of miRNA biogenesis. Binds to primary microRNA pri-MIR140 and, with CELF1, negatively regulates the processing to mature miRNA. The chain is CUGBP Elav-like family member 2 (CELF2) from Homo sapiens (Human).